The primary structure comprises 983 residues: Protein translocase subunit SecA (983 aa).

Residues Q83, 101–105 (GEGKT), and D489 each bind ATP. The disordered stretch occupies residues 948–983 (ISSEEEDNNEKTNINNNEDLERTKGEAQQTAKNPNE). A compositionally biased stretch (polar residues) spans 973–983 (EAQQTAKNPNE).

It belongs to the SecA family. Monomer and homodimer. Part of the essential Sec protein translocation apparatus which comprises SecA, SecYEG and auxiliary proteins SecDF. Other proteins may also be involved.

It localises to the cell membrane. Its subcellular location is the cytoplasm. The catalysed reaction is ATP + H2O + cellular proteinSide 1 = ADP + phosphate + cellular proteinSide 2.. Functionally, part of the Sec protein translocase complex. Interacts with the SecYEG preprotein conducting channel. Has a central role in coupling the hydrolysis of ATP to the transfer of proteins into and across the cell membrane, serving as an ATP-driven molecular motor driving the stepwise translocation of polypeptide chains across the membrane. This is Protein translocase subunit SecA from Mesomycoplasma hyopneumoniae (strain 232) (Mycoplasma hyopneumoniae).